An 858-amino-acid polypeptide reads, in one-letter code: Adenylate cyclase, germination specific (858 aa).

Residues 1 to 18 (MKKTFVKILSKSYVEGYP) are Cytoplasmic-facing. The chain crosses the membrane as a helical; Signal-anchor for type II membrane protein span at residues 19–41 (VGFFIGLIILAIFGSMVCIFSFM). Topologically, residues 42–858 (HYSEEENSNI…DENVESKKNK (817 aa)) are extracellular. The CHASE domain maps to 86-317 (VNPNFDRNDF…DCVLKLWIFT (232 aa)). One can recognise a Guanylate cyclase domain in the interval 396 to 526 (CVFFLDIAGF…DTVNVASRME (131 aa)). D401, I402, and D445 together coordinate Mg(2+). 3 disordered regions span residues 650–691 (YYYH…YHDT), 767–803 (SDNV…STNE), and 827–858 (ENCD…KKNK). Composition is skewed to low complexity over residues 767-778 (SDNVNNYENNNN), 788-797 (GDNNNINDNN), and 834-849 (DNNN…NNND).

It belongs to the adenylyl cyclase class-4/guanylyl cyclase family.

It localises to the membrane. The catalysed reaction is ATP = 3',5'-cyclic AMP + diphosphate. Its activity is regulated as follows. Insensitive to guanine nucleotides. Functionally, has a large extracellular domain which may be involved in the recognition of an extracellular signal present during germination, leading to activation or inhibition of cAMP synthesis by the cytoplasmic domain. This chain is Adenylate cyclase, germination specific (acgA), found in Dictyostelium discoideum (Social amoeba).